The chain runs to 257 residues: Protein orai-2 (257 aa).

4 consecutive transmembrane segments (helical) span residues 62 to 79 (ASSR…VAMV), 94 to 114 (LIAF…ALLI), 156 to 176 (LGIL…FLPI), and 201 to 221 (LVST…TIHF).

The protein belongs to the Orai family.

It is found in the membrane. Its function is as follows. Ca(2+) release-activated Ca(2+)-like (CRAC-like) channel subunit which mediates Ca(2+) influx and increase in Ca(2+)-selective current by synergy with the Ca(2+) sensor, stim1. In Xenopus laevis (African clawed frog), this protein is Protein orai-2 (orai2).